A 60-amino-acid polypeptide reads, in one-letter code: Large ribosomal subunit protein bL32 (60 aa).

Residues 1-23 (MAVPARHTSKAKKNKRRTHYKLT) are disordered. The segment covering 7-20 (HTSKAKKNKRRTHY) has biased composition (basic residues).

Belongs to the bacterial ribosomal protein bL32 family.

This Streptococcus equi subsp. equi (strain 4047) protein is Large ribosomal subunit protein bL32.